The sequence spans 363 residues: Peptide chain release factor 1 (363 aa).

Q237 carries the post-translational modification N5-methylglutamine. The span at 284–296 (EDEKRRSAEESTR) shows a compositional bias: basic and acidic residues. The segment at 284 to 305 (EDEKRRSAEESTRRSLVASGDR) is disordered.

Belongs to the prokaryotic/mitochondrial release factor family. In terms of processing, methylated by PrmC. Methylation increases the termination efficiency of RF1.

The protein resides in the cytoplasm. Its function is as follows. Peptide chain release factor 1 directs the termination of translation in response to the peptide chain termination codons UAG and UAA. In Shewanella baltica (strain OS185), this protein is Peptide chain release factor 1.